A 341-amino-acid chain; its full sequence is tRNA N6-adenosine threonylcarbamoyltransferase (341 aa).

Positions 115 and 119 each coordinate Fe cation. Substrate is bound by residues 137–141 (IVSGG), Asp170, Gly183, Asp187, and Asn276. Asp304 contacts Fe cation.

This sequence belongs to the KAE1 / TsaD family. The cofactor is Fe(2+).

The protein localises to the cytoplasm. The catalysed reaction is L-threonylcarbamoyladenylate + adenosine(37) in tRNA = N(6)-L-threonylcarbamoyladenosine(37) in tRNA + AMP + H(+). Its function is as follows. Required for the formation of a threonylcarbamoyl group on adenosine at position 37 (t(6)A37) in tRNAs that read codons beginning with adenine. Is involved in the transfer of the threonylcarbamoyl moiety of threonylcarbamoyl-AMP (TC-AMP) to the N6 group of A37, together with TsaE and TsaB. TsaD likely plays a direct catalytic role in this reaction. The protein is tRNA N6-adenosine threonylcarbamoyltransferase of Staphylococcus aureus (strain Mu3 / ATCC 700698).